The sequence spans 856 residues: Leucine--tRNA ligase (856 aa).

The short motif at 53–63 (PYPSGNLHMGH) is the 'HIGH' region element. Positions 622 to 626 (KMSKS) match the 'KMSKS' region motif. Residue lysine 625 participates in ATP binding.

It belongs to the class-I aminoacyl-tRNA synthetase family.

The protein resides in the cytoplasm. It carries out the reaction tRNA(Leu) + L-leucine + ATP = L-leucyl-tRNA(Leu) + AMP + diphosphate. The protein is Leucine--tRNA ligase of Prochlorococcus marinus (strain AS9601).